Consider the following 232-residue polypeptide: Imidazoleglycerol-phosphate dehydratase (232 aa).

This sequence belongs to the imidazoleglycerol-phosphate dehydratase family.

It catalyses the reaction D-erythro-1-(imidazol-4-yl)glycerol 3-phosphate = 3-(imidazol-4-yl)-2-oxopropyl phosphate + H2O. It functions in the pathway amino-acid biosynthesis; L-histidine biosynthesis; L-histidine from 5-phospho-alpha-D-ribose 1-diphosphate: step 6/9. The protein is Imidazoleglycerol-phosphate dehydratase (HIS3) of Lachancea kluyveri (strain ATCC 58438 / CBS 3082 / BCRC 21498 / NBRC 1685 / JCM 7257 / NCYC 543 / NRRL Y-12651) (Yeast).